A 671-amino-acid chain; its full sequence is UvrABC system protein B (671 aa).

One can recognise a Helicase ATP-binding domain in the interval E25–R412. G38 to T45 is an ATP binding site. The short motif at Y91 to I114 is the Beta-hairpin element. The 154-residue stretch at Q429–I582 folds into the Helicase C-terminal domain. Residues T632–R667 enclose the UVR domain.

This sequence belongs to the UvrB family. As to quaternary structure, forms a heterotetramer with UvrA during the search for lesions. Interacts with UvrC in an incision complex.

It localises to the cytoplasm. Functionally, the UvrABC repair system catalyzes the recognition and processing of DNA lesions. A damage recognition complex composed of 2 UvrA and 2 UvrB subunits scans DNA for abnormalities. Upon binding of the UvrA(2)B(2) complex to a putative damaged site, the DNA wraps around one UvrB monomer. DNA wrap is dependent on ATP binding by UvrB and probably causes local melting of the DNA helix, facilitating insertion of UvrB beta-hairpin between the DNA strands. Then UvrB probes one DNA strand for the presence of a lesion. If a lesion is found the UvrA subunits dissociate and the UvrB-DNA preincision complex is formed. This complex is subsequently bound by UvrC and the second UvrB is released. If no lesion is found, the DNA wraps around the other UvrB subunit that will check the other stand for damage. The protein is UvrABC system protein B of Pseudomonas putida (strain ATCC 47054 / DSM 6125 / CFBP 8728 / NCIMB 11950 / KT2440).